The chain runs to 674 residues: Pesticidal crystal protein Cry24Aa (674 aa).

This sequence belongs to the delta endotoxin family.

Functionally, promotes colloidosmotic lysis by binding to the midgut epithelial cells of insects. The chain is Pesticidal crystal protein Cry24Aa (cry24Aa) from Bacillus thuringiensis subsp. jegathesan.